Here is a 261-residue protein sequence, read N- to C-terminus: Carbonic anhydrase 1 (261 aa).

The tract at residues Met1–Pro31 is disordered. Ala2 carries the N-acetylalanine modification. Positions Pro4 to Phe261 constitute an Alpha-carbonic anhydrase domain. Catalysis depends on His65, which acts as the Proton donor/acceptor. Positions 95, 97, and 120 each coordinate Zn(2+). Residues Thr200 and Thr200–His201 each bind substrate. The segment at Val240–Phe261 is disordered.

Belongs to the alpha-carbonic anhydrase family. It depends on Zn(2+) as a cofactor.

The protein resides in the cytoplasm. The catalysed reaction is hydrogencarbonate + H(+) = CO2 + H2O. It carries out the reaction urea = cyanamide + H2O. With respect to regulation, inhibited by acetazolamide. Functionally, catalyzes the reversible hydration of carbon dioxide. Can hydrate cyanamide to urea. The polypeptide is Carbonic anhydrase 1 (CA1) (Gorilla gorilla gorilla (Western lowland gorilla)).